The following is a 151-amino-acid chain: SsrA-binding protein (151 aa).

The protein belongs to the SmpB family.

The protein localises to the cytoplasm. Required for rescue of stalled ribosomes mediated by trans-translation. Binds to transfer-messenger RNA (tmRNA), required for stable association of tmRNA with ribosomes. tmRNA and SmpB together mimic tRNA shape, replacing the anticodon stem-loop with SmpB. tmRNA is encoded by the ssrA gene; the 2 termini fold to resemble tRNA(Ala) and it encodes a 'tag peptide', a short internal open reading frame. During trans-translation Ala-aminoacylated tmRNA acts like a tRNA, entering the A-site of stalled ribosomes, displacing the stalled mRNA. The ribosome then switches to translate the ORF on the tmRNA; the nascent peptide is terminated with the 'tag peptide' encoded by the tmRNA and targeted for degradation. The ribosome is freed to recommence translation, which seems to be the essential function of trans-translation. The sequence is that of SsrA-binding protein from Nitrosomonas europaea (strain ATCC 19718 / CIP 103999 / KCTC 2705 / NBRC 14298).